The chain runs to 155 residues: Class I hydrophobin C (155 aa).

The signal sequence occupies residues 1-22 (MLVTMRLSRSIAVFTLVTYATG). Intrachain disulfides connect C52/C129, C60/C123, C61/C101, and C130/C148.

This sequence belongs to the fungal hydrophobin family. Self-assembles to form functional amyloid fibrils called rodlets. Self-assembly into fibrillar rodlets occurs spontaneously at hydrophobic:hydrophilic interfaces and the rodlets further associate laterally to form amphipathic monolayers.

It localises to the secreted. The protein localises to the spore wall. Aerial growth, conidiation, and dispersal of filamentous fungi in the environment rely upon a capability of their secreting small amphipathic proteins called hydrophobins (HPBs) with low sequence identity. Class I can self-assemble into an outermost layer of rodlet bundles on aerial cell surfaces, conferring cellular hydrophobicity that supports fungal growth, development and dispersal; whereas Class II form highly ordered films at water-air interfaces through intermolecular interactions but contribute nothing to the rodlet structure. RodC is a class I hydrophobin that, unlike rodA, is not required for rodlet formation. This chain is Class I hydrophobin C, found in Aspergillus fumigatus (strain ATCC MYA-4609 / CBS 101355 / FGSC A1100 / Af293) (Neosartorya fumigata).